The chain runs to 150 residues: Leukotriene C4 synthase (150 aa).

Topologically, residues 1–6 (MKDEVA) are cytoplasmic. The helical transmembrane segment at 7-27 (LLATVTLVGVLLQAYFSLQVI) threads the bilayer. The Lumenal portion of the chain corresponds to 28-48 (SARRAFHVSPPLTSGPPEFER). Residue Arg30 coordinates glutathione. Arg31 acts as the Proton donor in catalysis. A Phosphoserine modification is found at Ser36. Residues 49–69 (VFRAQVNCSEYFPLFLATLWV) form a helical membrane-spanning segment. Residues 51–55 (RAQVN), Gln53, and 58–59 (EY) contribute to the glutathione site. At 70 to 73 (AGIF) the chain is on the cytoplasmic side. The chain crosses the membrane as a helical span at residues 74–94 (FHEGAAALCGLFYLFARLRYF). 93 to 97 (YFQGY) is a glutathione binding site. Over 95–104 (QGYARSAQLR) the chain is Lumenal. Arg104 (proton acceptor) is an active-site residue. The chain crosses the membrane as a helical span at residues 105–124 (LTPLYASARALWLLVAMAAL). Residues 125–150 (GLLVHFLPGTLRTALFRWLQMLLPMA) are Cytoplasmic-facing.

The protein belongs to the MAPEG family. Homotrimer. Interacts with ALOX5AP and ALOX5. Phosphorylation at Ser-36 by RPS6KB1 inhibits the leukotriene-C4 synthase activity. Widely expressed.

It is found in the nucleus outer membrane. It localises to the endoplasmic reticulum membrane. The protein resides in the nucleus membrane. The catalysed reaction is leukotriene C4 = leukotriene A4 + glutathione. The enzyme catalyses (13S,14S)-epoxy-(4Z,7Z,9E,11E,16Z,19Z)-docosahexaenoate + glutathione = (13R)-S-glutathionyl-(14S)-hydroxy-(4Z,7Z,9E,11E,16Z,19Z)-docosahexaenoate. It participates in lipid metabolism; leukotriene C4 biosynthesis. Inhibited by MK886. Functionally, catalyzes the conjugation of leukotriene A4 with reduced glutathione (GSH) to form leukotriene C4 with high specificity. Can also catalyze the transfer of a glutathionyl group from glutathione (GSH) to 13(S),14(S)-epoxy-docosahexaenoic acid to form maresin conjugate in tissue regeneration 1 (MCTR1), a bioactive lipid mediator that possess potent anti-inflammatory and proresolving actions. The protein is Leukotriene C4 synthase (Ltc4s) of Mus musculus (Mouse).